Consider the following 1234-residue polypeptide: MAPQQPQPTSQDWDVEFNQVRREKLFRDPPTDRTAYPALQAAVDPHIESFNALFRDDGKPSLLDHALAEIGTKTFLDGDERADPQGKNKLTIRYKSIELQKSQVPPTNRWAKNREIFPAECRERHVSYRGKLSATFEYRINDGEPHEFVRELGQMPIMVKSNKCHLQNNSPAQLVARKEESEELGGYFIVNGIEKLIRMLLVNRRNFPLAIVRPSFQNRGASYTPYGIIMRSVRPDETSQTNVLHYLSDGNVTFRFSWRKNEYLIPVMMIMKALVETNDREIFEGLVGPPQSKGVANTFLTDRVELLLRTYKKYGLYSKTQTRAYLGQKFRVVLGVPDTMSDYEVGTEFLRKIVLVHLGSQDVTEQQDADKFNMLLFMCRKLYALVAGDCAVDNPDAVQNQEILLGGFLYGQIIKERLEELLTVSFRASLRDYLRRNPTVSFQSDTFLKDFPIAIFRRANENIGQSLEYFLSTGNLVSPSGLDLQQVSGFTVVAEKLNFLRFISHFRMVHRGSFFAQLKTTTVRKLLPESWGFLCPVHTPDGSPCGLLNHLAHKCKIMTESVDASTISRLAFELGVVNISSAATSESVVVMLDGRIVGWCTPEECKSIAETLRYWKVNGENGVPLQLEIGYVPPSNGGSYPGLYMSSQPARMVRPVKYLPLQKEDFVGPQEQPYMSIACTEQEVIPGDSTHVEFDPTNILSILANMTPFSDFNQSPRNMYQCQMGKQTMGTPATALAHRTDNKMYRLQTGQTPVVRAPLHNTYGFDNFPNGMNAVVAVISYTGYDMDDAMILNKSAHERGFGHGSIYKTKKVSLKDDSRTRSAKSIVKMFGFAPNSTIRESTRDMLDNDGLPRVGRLLREGDVICAWHTVSADYNGQLVNRDGVTHYERYKDSEDAFVEEVRVIGADNGTEPLQTVSIKLRIPRSPVIGDKFSSRHGQKGVLSQKWPATDMPFSETGIQPDVIINPHAFPSRMTIGMFVESLAGKAGALHGLAQDSTPFKFDEQNTAGDYFGHQLMKAGYNYHGNEPLYSGITGEEFQADIYIGVVYYQRLRHMVNDKYQVRTTGPVVPTTGQPIKGRKKGGGIRVGEMERDALLAHGTSFLLQDRLLNCSDYSKSWMCRQCGSFLSTQPTVSPFIGKRKAVSTVRCRNCAVRLDDMEDVDLMQIDGEIWEDGSGTQWIGGENTTIVAVPGALKYLDVELAAMGIKLKYKVDKKDEIRRGQLVGKKAGDLMLTA.

The C4-type zinc finger occupies Cys-1119–Cys-1150.

Belongs to the RNA polymerase beta chain family. As to quaternary structure, component of the RNA polymerase I (Pol I) complex consisting of 14 subunits.

The protein localises to the nucleus. It localises to the nucleolus. The catalysed reaction is RNA(n) + a ribonucleoside 5'-triphosphate = RNA(n+1) + diphosphate. DNA-dependent RNA polymerase catalyzes the transcription of DNA into RNA using the four ribonucleoside triphosphates as substrates. Second largest core component of RNA polymerase I which synthesizes ribosomal RNA precursors. Proposed to contribute to the polymerase catalytic activity and forms the polymerase active center together with the largest subunit. Pol I is composed of mobile elements and RPA2 is part of the core element with the central large cleft and probably a clamp element that moves to open and close the cleft. The chain is DNA-directed RNA polymerase I subunit RPA2 (acr-2) from Neurospora crassa (strain ATCC 24698 / 74-OR23-1A / CBS 708.71 / DSM 1257 / FGSC 987).